The chain runs to 140 residues: Probable glycine cleavage system H protein (140 aa).

One can recognise a Lipoyl-binding domain in the interval 22–114 (RAIIGITSYA…YEEGWIVVLE (93 aa)). Lys-63 is modified (N6-lipoyllysine).

Belongs to the GcvH family. As to quaternary structure, the glycine cleavage system is composed of four proteins: P, T, L and H. The cofactor is (R)-lipoate.

The glycine cleavage system catalyzes the degradation of glycine. The H protein shuttles the methylamine group of glycine from the P protein to the T protein. The sequence is that of Probable glycine cleavage system H protein from Korarchaeum cryptofilum (strain OPF8).